We begin with the raw amino-acid sequence, 358 residues long: Phospho-N-acetylmuramoyl-pentapeptide-transferase (358 aa).

10 helical membrane passes run Thr-26 to Arg-46, Thr-71 to Ala-91, Leu-93 to Phe-113, Met-134 to Phe-154, Leu-170 to Asn-190, Gly-197 to Ala-217, Ala-234 to Phe-254, Val-261 to Leu-281, Ile-286 to Val-306, and Lys-335 to Leu-355.

It belongs to the glycosyltransferase 4 family. MraY subfamily. Mg(2+) serves as cofactor.

Its subcellular location is the cell inner membrane. It carries out the reaction UDP-N-acetyl-alpha-D-muramoyl-L-alanyl-gamma-D-glutamyl-meso-2,6-diaminopimeloyl-D-alanyl-D-alanine + di-trans,octa-cis-undecaprenyl phosphate = di-trans,octa-cis-undecaprenyl diphospho-N-acetyl-alpha-D-muramoyl-L-alanyl-D-glutamyl-meso-2,6-diaminopimeloyl-D-alanyl-D-alanine + UMP. It participates in cell wall biogenesis; peptidoglycan biosynthesis. Catalyzes the initial step of the lipid cycle reactions in the biosynthesis of the cell wall peptidoglycan: transfers peptidoglycan precursor phospho-MurNAc-pentapeptide from UDP-MurNAc-pentapeptide onto the lipid carrier undecaprenyl phosphate, yielding undecaprenyl-pyrophosphoryl-MurNAc-pentapeptide, known as lipid I. This is Phospho-N-acetylmuramoyl-pentapeptide-transferase from Trichlorobacter lovleyi (strain ATCC BAA-1151 / DSM 17278 / SZ) (Geobacter lovleyi).